We begin with the raw amino-acid sequence, 36 residues long: Dermonecrotic toxin LgSicTox-beta-LOXN1/LOXN7 (36 aa).

The protein belongs to the arthropod phospholipase D family. Class II subfamily. Mg(2+) is required as a cofactor. Post-translationally, contains 2 disulfide bonds. As to expression, expressed by the venom gland.

The protein resides in the secreted. It catalyses the reaction an N-(acyl)-sphingosylphosphocholine = an N-(acyl)-sphingosyl-1,3-cyclic phosphate + choline. It carries out the reaction an N-(acyl)-sphingosylphosphoethanolamine = an N-(acyl)-sphingosyl-1,3-cyclic phosphate + ethanolamine. The catalysed reaction is a 1-acyl-sn-glycero-3-phosphocholine = a 1-acyl-sn-glycero-2,3-cyclic phosphate + choline. The enzyme catalyses a 1-acyl-sn-glycero-3-phosphoethanolamine = a 1-acyl-sn-glycero-2,3-cyclic phosphate + ethanolamine. Its function is as follows. Dermonecrotic toxins cleave the phosphodiester linkage between the phosphate and headgroup of certain phospholipids (sphingolipid and lysolipid substrates), forming an alcohol (often choline) and a cyclic phosphate. This toxin acts on sphingomyelin (SM). It may also act on ceramide phosphoethanolamine (CPE), lysophosphatidylcholine (LPC) and lysophosphatidylethanolamine (LPE), but not on lysophosphatidylserine (LPS), and lysophosphatidylglycerol (LPG). It acts by transphosphatidylation, releasing exclusively cyclic phosphate products as second products. Induces dermonecrosis, hemolysis, increased vascular permeability, edema, inflammatory response, and platelet aggregation. This chain is Dermonecrotic toxin LgSicTox-beta-LOXN1/LOXN7, found in Loxosceles gaucho (Spider).